The following is a 168-amino-acid chain: Endoribonuclease YbeY (168 aa).

Zn(2+) contacts are provided by His-126, His-130, and His-136.

This sequence belongs to the endoribonuclease YbeY family. Zn(2+) serves as cofactor.

It localises to the cytoplasm. In terms of biological role, single strand-specific metallo-endoribonuclease involved in late-stage 70S ribosome quality control and in maturation of the 3' terminus of the 16S rRNA. The protein is Endoribonuclease YbeY of Rhizobium meliloti (strain 1021) (Ensifer meliloti).